Here is a 510-residue protein sequence, read N- to C-terminus: ATP synthase subunit alpha (510 aa).

169 to 176 (GDRQTGKT) provides a ligand contact to ATP.

It belongs to the ATPase alpha/beta chains family. In terms of assembly, F-type ATPases have 2 components, CF(1) - the catalytic core - and CF(0) - the membrane proton channel. CF(1) has five subunits: alpha(3), beta(3), gamma(1), delta(1), epsilon(1). CF(0) has three main subunits: a(1), b(2) and c(9-12). The alpha and beta chains form an alternating ring which encloses part of the gamma chain. CF(1) is attached to CF(0) by a central stalk formed by the gamma and epsilon chains, while a peripheral stalk is formed by the delta and b chains.

The protein localises to the cell inner membrane. It carries out the reaction ATP + H2O + 4 H(+)(in) = ADP + phosphate + 5 H(+)(out). Its function is as follows. Produces ATP from ADP in the presence of a proton gradient across the membrane. The alpha chain is a regulatory subunit. This is ATP synthase subunit alpha from Anaeromyxobacter dehalogenans (strain 2CP-1 / ATCC BAA-258).